We begin with the raw amino-acid sequence, 403 residues long: Acetyl-CoA acetyltransferase IB (403 aa).

The active-site Acyl-thioester intermediate is the Cys-91. Catalysis depends on proton acceptor residues His-353 and Cys-383. The Microbody targeting signal signature appears at 401–403; the sequence is AKL.

It belongs to the thiolase-like superfamily. Thiolase family. Multimeric.

Its subcellular location is the peroxisome. The enzyme catalyses 2 acetyl-CoA = acetoacetyl-CoA + CoA. It participates in metabolic intermediate biosynthesis; (R)-mevalonate biosynthesis; (R)-mevalonate from acetyl-CoA: step 1/3. In Candida tropicalis (Yeast), this protein is Acetyl-CoA acetyltransferase IB (PACTB).